A 280-amino-acid chain; its full sequence is 2-dehydro-3-deoxyphosphooctonate aldolase (280 aa).

It belongs to the KdsA family.

Its subcellular location is the cytoplasm. The enzyme catalyses D-arabinose 5-phosphate + phosphoenolpyruvate + H2O = 3-deoxy-alpha-D-manno-2-octulosonate-8-phosphate + phosphate. It functions in the pathway carbohydrate biosynthesis; 3-deoxy-D-manno-octulosonate biosynthesis; 3-deoxy-D-manno-octulosonate from D-ribulose 5-phosphate: step 2/3. Its pathway is bacterial outer membrane biogenesis; lipopolysaccharide biosynthesis. The chain is 2-dehydro-3-deoxyphosphooctonate aldolase from Pseudomonas putida (strain W619).